The following is a 479-amino-acid chain: ATP synthase subunit beta, chloroplastic (479 aa).

156 to 163 (GGAGVGKT) provides a ligand contact to ATP.

This sequence belongs to the ATPase alpha/beta chains family. As to quaternary structure, F-type ATPases have 2 components, CF(1) - the catalytic core - and CF(0) - the membrane proton channel. CF(1) has five subunits: alpha(3), beta(3), gamma(1), delta(1), epsilon(1). CF(0) has four main subunits: a(1), b(1), b'(1) and c(9-12).

The protein resides in the plastid. The protein localises to the chloroplast thylakoid membrane. It carries out the reaction ATP + H2O + 4 H(+)(in) = ADP + phosphate + 5 H(+)(out). In terms of biological role, produces ATP from ADP in the presence of a proton gradient across the membrane. The catalytic sites are hosted primarily by the beta subunits. The protein is ATP synthase subunit beta, chloroplastic of Trichomanes davallioides (Kilau fern).